Here is a 620-residue protein sequence, read N- to C-terminus: Chaperone protein HscA homolog (620 aa).

The protein belongs to the heat shock protein 70 family.

Functionally, chaperone involved in the maturation of iron-sulfur cluster-containing proteins. Has a low intrinsic ATPase activity which is markedly stimulated by HscB. This Pseudomonas entomophila (strain L48) protein is Chaperone protein HscA homolog.